The following is a 276-amino-acid chain: ATP synthase subunit a (276 aa).

6 helical membrane passes run 47–67 (WHID…WLFY), 107–127 (IAPL…MDLI), 152–172 (DLNV…FYSI), 188–208 (PFNH…TLIA), 226–246 (LIFI…SVPW), and 247–267 (AIFH…LTIV).

Belongs to the ATPase A chain family. F-type ATPases have 2 components, CF(1) - the catalytic core - and CF(0) - the membrane proton channel. CF(1) has five subunits: alpha(3), beta(3), gamma(1), delta(1), epsilon(1). CF(0) has three main subunits: a(1), b(2) and c(9-12). The alpha and beta chains form an alternating ring which encloses part of the gamma chain. CF(1) is attached to CF(0) by a central stalk formed by the gamma and epsilon chains, while a peripheral stalk is formed by the delta and b chains.

The protein resides in the cell inner membrane. Its function is as follows. Key component of the proton channel; it plays a direct role in the translocation of protons across the membrane. This chain is ATP synthase subunit a, found in Shewanella halifaxensis (strain HAW-EB4).